Consider the following 623-residue polypeptide: MQSVIAYLKQQEIKPLLRFITCGSVDDGKSTLIGHLLYDSQCLAEDQLADLTVDSQRYGTQGEHIDYALLLDGLAAEREQGITIDVAYRYFDTEKRKFIVADCPGHAQYTRNMATGASSADAAVVLVDARKGLLTQTRRHSYIVALLGIRHVVLAVNKMDLVGYDQQTFEAIASDYLALAAKLGINQVQCIPLSALEGDNLCKRSARMLWYVGPSLLEYLEALEPADVDLAAAMCLPVQWVNRPDSQFRGFTGTLAAGRVRSGDGVVVLPSGCVSRVVRVFNGDTEVHEAVAGQAVTLTLADEIDISRGDVIAATDDPPEVADQVTAYVLWMDDTALLPGRRYWLKLGARMVAASVSDIKHRVDVNTQEQRVAQRLQLNELGYCQLSLDAPVAFVPYARNRVLGSFILIDRQSNATVGAGTLDSGVHCASNVHWQPLDIDHVARARIKGQTPKVLWFTGLSGAGKSAIANIVDKRLHALGYHTFILDGDNVRHGLNRDLSFTVEDRVENIRRVAEVARLMVDAGLVVLVSFISPFRDERQLARERFAADEFVEVFVDVPLAVAEARDVKGLYAKARAGLITDFTGIDSPYEPPQHPELHLRADQGTPEQLASQVLSLLGVEGK.

The tract at residues 1 to 450 (MQSVIAYLKQ…HVARARIKGQ (450 aa)) is sulfate adenylyltransferase. The tr-type G domain occupies 14–228 (KPLLRFITCG…YLEALEPADV (215 aa)). The tract at residues 23-30 (GSVDDGKS) is G1. Residue 23-30 (GSVDDGKS) coordinates GTP. The interval 81 to 85 (GITID) is G2. Residues 102–105 (DCPG) are G3. GTP contacts are provided by residues 102–106 (DCPGH) and 157–160 (NKMD). The tract at residues 157–160 (NKMD) is G4. The G5 stretch occupies residues 194–196 (SAL). The tract at residues 451 to 623 (TPKVLWFTGL…VLSLLGVEGK (173 aa)) is adenylyl-sulfate kinase. 459 to 466 (GLSGAGKS) lines the ATP pocket. Ser533 functions as the Phosphoserine intermediate in the catalytic mechanism.

It in the C-terminal section; belongs to the APS kinase family. In the N-terminal section; belongs to the TRAFAC class translation factor GTPase superfamily. Classic translation factor GTPase family. CysN/NodQ subfamily. In terms of assembly, heterodimer composed of CysD, the smaller subunit, and CysNC.

It catalyses the reaction sulfate + ATP + H(+) = adenosine 5'-phosphosulfate + diphosphate. The enzyme catalyses adenosine 5'-phosphosulfate + ATP = 3'-phosphoadenylyl sulfate + ADP + H(+). It functions in the pathway sulfur metabolism; hydrogen sulfide biosynthesis; sulfite from sulfate: step 1/3. The protein operates within sulfur metabolism; hydrogen sulfide biosynthesis; sulfite from sulfate: step 2/3. With CysD forms the ATP sulfurylase (ATPS) that catalyzes the adenylation of sulfate producing adenosine 5'-phosphosulfate (APS) and diphosphate, the first enzymatic step in sulfur assimilation pathway. APS synthesis involves the formation of a high-energy phosphoric-sulfuric acid anhydride bond driven by GTP hydrolysis by CysN coupled to ATP hydrolysis by CysD. In terms of biological role, APS kinase catalyzes the synthesis of activated sulfate. In Xylella fastidiosa (strain Temecula1 / ATCC 700964), this protein is Bifunctional enzyme CysN/CysC (cysNC).